A 223-amino-acid chain; its full sequence is Endonuclease NucS (223 aa).

It belongs to the NucS endonuclease family.

The protein localises to the cytoplasm. Functionally, cleaves both 3' and 5' ssDNA extremities of branched DNA structures. The polypeptide is Endonuclease NucS (Streptomyces griseus subsp. griseus (strain JCM 4626 / CBS 651.72 / NBRC 13350 / KCC S-0626 / ISP 5235)).